We begin with the raw amino-acid sequence, 905 residues long: Stonin-2 (905 aa).

Disordered stretches follow at residues methionine 1–threonine 121, glutamate 178–glutamate 205, and leucine 244–proline 263. Positions serine 40 to serine 50 are enriched in low complexity. Basic and acidic residues predominate over residues serine 60–glutamate 73. The span at proline 85 to aspartate 94 shows a compositional bias: pro residues. Over residues glutamate 178–leucine 196 the composition is skewed to polar residues. The span at leucine 244 to proline 256 shows a compositional bias: pro residues. Threonine 255 carries the post-translational modification Phosphothreonine. Residues serine 281, serine 287, and serine 302 each carry the phosphoserine modification. 2 consecutive short sequence motifs (NPF) follow at residues asparagine 313–phenylalanine 315 and asparagine 329–phenylalanine 331. The SHD domain maps to glycine 427 to serine 560. In terms of domain architecture, MHD spans glutamate 568–tryptophan 878. Phosphoserine is present on serine 762.

The protein belongs to the Stoned B family. In terms of assembly, interacts with the second C2 domain of synaptotagmins SYT1 and SYT2. Interacts with EPS15, EPS15R and ITSN1. Interacts indirectly with the AP-2 adapter complex. Interacts with TOR1A and COPS4; the interaction controls STON2 protein stability. In terms of processing, phosphorylated in vitro by PKD. Neddylated; deneddylated via its interaction with the COP9 signalosome (CSN) complex through TOR1A and COPS4. Post-translationally, ubiquitinated; leading to its degradation. As to expression, ubiquitous.

Its subcellular location is the cytoplasm. The protein localises to the membrane. It is found in the synapse. It localises to the synaptosome. In terms of biological role, adapter protein involved in endocytic machinery. Involved in the synaptic vesicle recycling. May facilitate clathrin-coated vesicle uncoating. This Homo sapiens (Human) protein is Stonin-2 (STON2).